The sequence spans 710 residues: Adenylosuccinate synthetase (710 aa).

A disordered region spans residues 1 to 54 (MPVRRYGGRYNSSSPGVSNALNPSRTAGWPLSPSPATGSKPASTHHDPVPQEAY). Residues 10-25 (YNSSSPGVSNALNPSR) are compositionally biased toward polar residues. Residues 44–54 (THHDPVPQEAY) show a composition bias toward basic and acidic residues. GTP contacts are provided by residues 180–186 (GDEGKGK) and 210–212 (GHT). D181 acts as the Proton acceptor in catalysis. Positions 181 and 210 each coordinate Mg(2+). IMP contacts are provided by residues 181–184 (DEGK), 208–211 (NAGH), T295, K309, Q421, T437, and K567. The active-site Proton donor is the H211. Position 563 to 569 (563 to 569 (AVTKKPR)) interacts with substrate. GTP contacts are provided by residues R569 and 697–699 (GNG).

The protein belongs to the adenylosuccinate synthetase family. As to quaternary structure, homodimer. Mg(2+) is required as a cofactor.

It is found in the cytoplasm. It carries out the reaction IMP + L-aspartate + GTP = N(6)-(1,2-dicarboxyethyl)-AMP + GDP + phosphate + 2 H(+). The protein operates within purine metabolism; AMP biosynthesis via de novo pathway; AMP from IMP: step 1/2. Functionally, plays an important role in the salvage pathway for purine nucleotide biosynthesis. Catalyzes the first committed step in the biosynthesis of AMP from IMP. The polypeptide is Adenylosuccinate synthetase (Leishmania major).